The primary structure comprises 193 residues: Peptide deformylase (193 aa).

Positions 111 and 155 each coordinate Fe cation. Glu-156 is an active-site residue. His-159 contacts Fe cation.

It belongs to the polypeptide deformylase family. Requires Fe(2+) as cofactor.

It catalyses the reaction N-terminal N-formyl-L-methionyl-[peptide] + H2O = N-terminal L-methionyl-[peptide] + formate. Its function is as follows. Removes the formyl group from the N-terminal Met of newly synthesized proteins. Requires at least a dipeptide for an efficient rate of reaction. N-terminal L-methionine is a prerequisite for activity but the enzyme has broad specificity at other positions. The polypeptide is Peptide deformylase (Mycoplasma genitalium (strain ATCC 33530 / DSM 19775 / NCTC 10195 / G37) (Mycoplasmoides genitalium)).